The primary structure comprises 181 residues: NAD(P)H-quinone oxidoreductase subunit 6, chloroplastic (181 aa).

The next 5 membrane-spanning stretches (helical) occupy residues 13–33 (PILYFLDVGILLGGLGVVFFG), 35–55 (IIYSALFLGVVFVCVALLYLL), 64–84 (AQILIYVGAINVLIVFAIMLI), 98–118 (FGDILSGFSVFGLFSFLIIMI), and 152–172 (LLPFELLSILLLVALVGAITI).

It belongs to the complex I subunit 6 family. As to quaternary structure, NDH is composed of at least 16 different subunits, 5 of which are encoded in the nucleus.

The protein resides in the plastid. It is found in the chloroplast thylakoid membrane. It catalyses the reaction a plastoquinone + NADH + (n+1) H(+)(in) = a plastoquinol + NAD(+) + n H(+)(out). The enzyme catalyses a plastoquinone + NADPH + (n+1) H(+)(in) = a plastoquinol + NADP(+) + n H(+)(out). In terms of biological role, NDH shuttles electrons from NAD(P)H:plastoquinone, via FMN and iron-sulfur (Fe-S) centers, to quinones in the photosynthetic chain and possibly in a chloroplast respiratory chain. The immediate electron acceptor for the enzyme in this species is believed to be plastoquinone. Couples the redox reaction to proton translocation, and thus conserves the redox energy in a proton gradient. The sequence is that of NAD(P)H-quinone oxidoreductase subunit 6, chloroplastic (ndhG) from Staurastrum punctulatum (Green alga).